Reading from the N-terminus, the 475-residue chain is Ribulose bisphosphate carboxylase large chain (475 aa).

A propeptide spanning residues 1–2 (MS) is cleaved from the precursor. An N-acetylproline modification is found at proline 3. N6,N6,N6-trimethyllysine is present on lysine 14. Residues asparagine 123 and threonine 173 each coordinate substrate. Lysine 175 functions as the Proton acceptor in the catalytic mechanism. Residue lysine 177 coordinates substrate. Residues lysine 201, aspartate 203, and glutamate 204 each contribute to the Mg(2+) site. N6-carboxylysine is present on lysine 201. Catalysis depends on histidine 294, which acts as the Proton acceptor. Residues arginine 295, histidine 327, and serine 379 each contribute to the substrate site.

The protein belongs to the RuBisCO large chain family. Type I subfamily. In terms of assembly, heterohexadecamer of 8 large chains and 8 small chains; disulfide-linked. The disulfide link is formed within the large subunit homodimers. It depends on Mg(2+) as a cofactor. In terms of processing, the disulfide bond which can form in the large chain dimeric partners within the hexadecamer appears to be associated with oxidative stress and protein turnover.

It localises to the plastid. The protein resides in the chloroplast. It carries out the reaction 2 (2R)-3-phosphoglycerate + 2 H(+) = D-ribulose 1,5-bisphosphate + CO2 + H2O. The enzyme catalyses D-ribulose 1,5-bisphosphate + O2 = 2-phosphoglycolate + (2R)-3-phosphoglycerate + 2 H(+). In terms of biological role, ruBisCO catalyzes two reactions: the carboxylation of D-ribulose 1,5-bisphosphate, the primary event in carbon dioxide fixation, as well as the oxidative fragmentation of the pentose substrate in the photorespiration process. Both reactions occur simultaneously and in competition at the same active site. The protein is Ribulose bisphosphate carboxylase large chain of Vitis vinifera (Grape).